The following is a 196-amino-acid chain: Adenine phosphoribosyltransferase (196 aa).

The protein belongs to the purine/pyrimidine phosphoribosyltransferase family. As to quaternary structure, homodimer.

It is found in the cytoplasm. It catalyses the reaction AMP + diphosphate = 5-phospho-alpha-D-ribose 1-diphosphate + adenine. It participates in purine metabolism; AMP biosynthesis via salvage pathway; AMP from adenine: step 1/1. Its function is as follows. Catalyzes a salvage reaction resulting in the formation of AMP, that is energically less costly than de novo synthesis. This is Adenine phosphoribosyltransferase from Methylibium petroleiphilum (strain ATCC BAA-1232 / LMG 22953 / PM1).